Consider the following 197-residue polypeptide: Holliday junction branch migration complex subunit RuvA (197 aa).

The tract at residues 1 to 63 is domain I; the sequence is MYAYLKGIIT…EDAHLLYGFR (63 aa). The domain II stretch occupies residues 64–142; that stretch reads SEDEKKLFLS…VAGDDLPAKV (79 aa). Residues 143-147 form a flexible linker region; sequence AVQAS. A domain III region spans residues 148 to 197; it reads AENQELEEAMEAMLALGYKATELKKIKKFFEGTTDTAENYIKSALKMLVK.

It belongs to the RuvA family. As to quaternary structure, homotetramer. Forms an RuvA(8)-RuvB(12)-Holliday junction (HJ) complex. HJ DNA is sandwiched between 2 RuvA tetramers; dsDNA enters through RuvA and exits via RuvB. An RuvB hexamer assembles on each DNA strand where it exits the tetramer. Each RuvB hexamer is contacted by two RuvA subunits (via domain III) on 2 adjacent RuvB subunits; this complex drives branch migration. In the full resolvosome a probable DNA-RuvA(4)-RuvB(12)-RuvC(2) complex forms which resolves the HJ.

The protein localises to the cytoplasm. In terms of biological role, the RuvA-RuvB-RuvC complex processes Holliday junction (HJ) DNA during genetic recombination and DNA repair, while the RuvA-RuvB complex plays an important role in the rescue of blocked DNA replication forks via replication fork reversal (RFR). RuvA specifically binds to HJ cruciform DNA, conferring on it an open structure. The RuvB hexamer acts as an ATP-dependent pump, pulling dsDNA into and through the RuvAB complex. HJ branch migration allows RuvC to scan DNA until it finds its consensus sequence, where it cleaves and resolves the cruciform DNA. The polypeptide is Holliday junction branch migration complex subunit RuvA (Streptococcus pneumoniae (strain Hungary19A-6)).